An 87-amino-acid chain; its full sequence is Putative regulatory protein syc0519_c (87 aa).

The protein belongs to the RemA family.

The sequence is that of Putative regulatory protein syc0519_c from Synechococcus sp. (strain ATCC 27144 / PCC 6301 / SAUG 1402/1) (Anacystis nidulans).